The chain runs to 205 residues: Cytochrome c biogenesis ATP-binding export protein CcmA 2 (205 aa).

Residues 2 to 205 (LEARDLHCER…LALTGGEAGL (204 aa)) enclose the ABC transporter domain. 34–41 (GGNGAGKT) contacts ATP.

The protein belongs to the ABC transporter superfamily. CcmA exporter (TC 3.A.1.107) family. The complex is composed of two ATP-binding proteins (CcmA) and two transmembrane proteins (CcmB).

It localises to the cell inner membrane. It catalyses the reaction heme b(in) + ATP + H2O = heme b(out) + ADP + phosphate + H(+). Part of the ABC transporter complex CcmAB involved in the biogenesis of c-type cytochromes; once thought to export heme, this seems not to be the case, but its exact role is uncertain. Responsible for energy coupling to the transport system. This is Cytochrome c biogenesis ATP-binding export protein CcmA 2 from Salmonella paratyphi A (strain ATCC 9150 / SARB42).